The following is a 1649-amino-acid chain: PHD and RING finger domain-containing protein 1 (1649 aa).

The interval 1 to 79 is disordered; it reads MDDDSLDELV…RSGSEDSEDD (79 aa). Ser-5 is subject to Phosphoserine. The span at 54-79 shows a compositional bias: acidic residues; the sequence is TDGEDEGASEEEDLEDRSGSEDSEDD. Residues 108 to 149 form an RING-type; degenerate zinc finger; sequence CPICLNAFRDQAVGTPENCAHYFCLDCIVEWSKNANSCPVDR. The segment at 183 to 233 adopts a PHD-type zinc-finger fold; that stretch reads PTFCEVCGRSDREDRLLLCDGCDAGYHMECLDPPLQEVPVDEWFCPECAAP. A disordered region spans residues 324–398; sequence VYQRPLTPRT…TRSRIARTLG (75 aa). Position 330 is a phosphothreonine (Thr-330). Residues 334–353 show a composition bias toward basic residues; the sequence is PARRKRKTRRRKKVPGRKKT. A compositionally biased stretch (low complexity) spans 354–366; sequence PSGPSAKSKSSAT. Positions 367–382 are enriched in basic residues; the sequence is RSKKRQHRVKKRRGKK. 2 positions are modified to phosphoserine: Ser-445 and Ser-455. 4 disordered regions span residues 534–600, 644–871, 888–1240, and 1281–1395; these read KRAA…GAPV, SAAS…PKAQ, FGTE…KAPL, and IQLD…PLLR. The segment covering 568–589 has biased composition (polar residues); the sequence is SPAQGPSGNRPQSTGLSCQGRS. Composition is skewed to basic and acidic residues over residues 685–697 and 727–742; these read IRRD…RDAA and TRAE…REPG. A compositionally biased stretch (polar residues) spans 786–796; the sequence is AHSSQLSSPGF. The segment covering 802-812 has biased composition (basic and acidic residues); that stretch reads PVDDKEQRKEN. Phosphoserine is present on residues Ser-814, Ser-845, Ser-846, Ser-864, Ser-867, and Ser-915. Polar residues-rich tracts occupy residues 835–848 and 859–871; these read PTGS…SSPE and ITRT…PKAQ. At Thr-917 the chain carries Phosphothreonine. Ser-936, Ser-973, and Ser-991 each carry phosphoserine. The segment covering 988-999 has biased composition (low complexity); sequence RPPSRSRSTSSS. Positions 1000–1011 are enriched in basic residues; it reads RSRKKAKRKRVS. Residues 1012–1030 are compositionally biased toward basic and acidic residues; the sequence is REHGRTRSGTRSESRDRSS. Basic residues predominate over residues 1043-1053; it reads RRQRSKAKSRR. The segment covering 1054–1063 has biased composition (basic and acidic residues); that stretch reads SSSDRSSSRE. Residues 1064–1090 show a composition bias toward basic residues; that stretch reads RAKRKKAKDKSREHRRGPWGHSRRTSR. A compositionally biased stretch (low complexity) spans 1091 to 1101; the sequence is SRSGSPGSSSY. A compositionally biased stretch (basic residues) spans 1106-1118; sequence SRKKKKRRSASRP. Phosphoserine occurs at positions 1124 and 1128. Composition is skewed to basic and acidic residues over residues 1141 to 1151 and 1181 to 1198; these read RSHERPDRKES and REKW…KGAV. Phosphoserine occurs at positions 1202 and 1229. A compositionally biased stretch (low complexity) spans 1284–1297; sequence DDMSSPPSPESTDS. The segment covering 1345–1356 has biased composition (basic and acidic residues); the sequence is HLLRPDAAEKAE. Phosphoserine occurs at positions 1359, 1360, and 1371. Thr-1404 bears the Phosphothreonine mark. Disordered stretches follow at residues 1407–1439, 1455–1486, 1526–1556, and 1630–1649; these read LQES…WDME, FPSH…AQPS, TPAS…EKTK, and MRRH…GAEG. Over residues 1531-1540 the composition is skewed to polar residues; sequence PASQATAASN. The segment covering 1541–1556 has biased composition (basic and acidic residues); that stretch reads SEEKTPAPRLAAEKTK. Positions 1549–1579 form a coiled coil; the sequence is RLAAEKTKKEEYMKKLHMQERAVEEVKLAIK.

Interacts with POLR2A (via the C-terminal domain).

This is PHD and RING finger domain-containing protein 1 (PHRF1) from Homo sapiens (Human).